The sequence spans 310 residues: Olfactory receptor 9Q1 (310 aa).

Over Met1 to Leu25 the chain is Extracellular. Residue Asn5 is glycosylated (N-linked (GlcNAc...) asparagine). The chain crosses the membrane as a helical span at residues Pro26–Ile46. The Cytoplasmic portion of the chain corresponds to Ile47–Gln54. Residues Leu55–Ser75 form a helical membrane-spanning segment. Residues Ile76 to Ala99 are Extracellular-facing. The cysteines at positions 97 and 189 are disulfide-linked. The helical transmembrane segment at Gln100–Tyr120 threads the bilayer. At Asp121 to Gln139 the chain is on the cytoplasmic side. The helical transmembrane segment at Ala140 to Thr160 threads the bilayer. Topologically, residues Val161 to Val197 are extracellular. A helical membrane pass occupies residues Leu198–Ser217. Residues Tyr218–Thr236 are Cytoplasmic-facing. The chain crosses the membrane as a helical span at residues Phe237–Met257. Residues Tyr258–Asn270 are Extracellular-facing. The helical transmembrane segment at Arg271–Leu291 threads the bilayer. Topologically, residues Arg292–Ser310 are cytoplasmic.

The protein belongs to the G-protein coupled receptor 1 family.

The protein resides in the cell membrane. Its function is as follows. Odorant receptor. The sequence is that of Olfactory receptor 9Q1 (OR9Q1) from Homo sapiens (Human).